The chain runs to 247 residues: Probable transcriptional regulatory protein GAU_0635 (247 aa).

It belongs to the TACO1 family.

It localises to the cytoplasm. The protein is Probable transcriptional regulatory protein GAU_0635 of Gemmatimonas aurantiaca (strain DSM 14586 / JCM 11422 / NBRC 100505 / T-27).